The primary structure comprises 284 residues: Prestalk D11 protein (284 aa).

The first 25 residues, 1–25 (MLNKLILLLILSSCLVLSVKSEVNV), serve as a signal peptide directing secretion. One copy of the A-1 repeat lies at 25–64 (VDCSLVRCAQPICKPHYRLNMTDSCCGRCEPCTDVACTLQ). The stretch at 65–82 (VKYCQDGEVPTGCCPCTL) is one B-1 repeat. The stretch at 88–126 (DCSLVKCARPVCKPYYRLNMTDSCCGRCEPCTGVACTLQ) is one A-2 repeat. The stretch at 127–144 (IKYCKDGEVPTGCCPCTP) is one B-2 repeat. Residues 145–159 (QPTKKPDCSKVPCPK) form a C-1 repeat. Residues 161–178 (LKYCQEGELPTGCCPCTP) form a B-3 repeat. A C-2 repeat occupies 179 to 193 (QPTKKPDCSRVPCPK). Residues 195 to 212 (LKYCKEGELPTGCCPCTP) form a B-4 repeat. Residues 213–228 (QPTKKPDCSDVMCTMD) form a C-3 repeat. The stretch at 229–246 (IRYCKNGELPTGCCPCTP) is one B-5 repeat. A C-4 repeat occupies 247–262 (QETKVPDCSKAMCTMD). A B-6 repeat occupies 263 to 278 (IKYCKPGEKPFGCCPC).

This is Prestalk D11 protein (ampA) from Dictyostelium discoideum (Social amoeba).